A 140-amino-acid polypeptide reads, in one-letter code: Nucleoside diphosphate kinase (140 aa).

ATP is bound by residues Lys9, Phe57, Arg85, Thr91, Arg102, and Asn112. His115 functions as the Pros-phosphohistidine intermediate in the catalytic mechanism.

It belongs to the NDK family. As to quaternary structure, homotetramer. The cofactor is Mg(2+).

It localises to the cytoplasm. The enzyme catalyses a 2'-deoxyribonucleoside 5'-diphosphate + ATP = a 2'-deoxyribonucleoside 5'-triphosphate + ADP. It carries out the reaction a ribonucleoside 5'-diphosphate + ATP = a ribonucleoside 5'-triphosphate + ADP. Functionally, major role in the synthesis of nucleoside triphosphates other than ATP. The ATP gamma phosphate is transferred to the NDP beta phosphate via a ping-pong mechanism, using a phosphorylated active-site intermediate. In Chlorobium limicola (strain DSM 245 / NBRC 103803 / 6330), this protein is Nucleoside diphosphate kinase.